A 102-amino-acid polypeptide reads, in one-letter code: Small ribosomal subunit protein uS10 (102 aa).

Belongs to the universal ribosomal protein uS10 family. Part of the 30S ribosomal subunit.

Its function is as follows. Involved in the binding of tRNA to the ribosomes. The polypeptide is Small ribosomal subunit protein uS10 (Citrifermentans bemidjiense (strain ATCC BAA-1014 / DSM 16622 / JCM 12645 / Bem) (Geobacter bemidjiensis)).